Reading from the N-terminus, the 86-residue chain is Large ribosomal subunit protein bL27 (86 aa).

The disordered stretch occupies residues 1–26; that stretch reads MATKKAGGSSRNGRDSAGRRLGVKKS.

The protein belongs to the bacterial ribosomal protein bL27 family.

This chain is Large ribosomal subunit protein bL27, found in Rickettsia prowazekii (strain Madrid E).